Here is a 542-residue protein sequence, read N- to C-terminus: Putative beta-glucosidase 23 (542 aa).

The N-terminal stretch at 1 to 29 (MAACTSSLVSLLLLLLLLLLLLVAGEATA) is a signal peptide. A glycan (N-linked (GlcNAc...) asparagine) is linked at Asn34. Gln88 contacts a beta-D-glucoside. Asn135 carries an N-linked (GlcNAc...) asparagine glycan. His216 is an a beta-D-glucoside binding site. The active-site Proton donor is the Glu262. Cys281 and Cys289 form a disulfide bridge. Tyr405 contacts a beta-D-glucoside. N-linked (GlcNAc...) asparagine glycosylation occurs at Asn445. A beta-D-glucoside contacts are provided by Trp476 and Phe492.

Belongs to the glycosyl hydrolase 1 family.

It carries out the reaction Hydrolysis of terminal, non-reducing beta-D-glucosyl residues with release of beta-D-glucose.. The protein is Putative beta-glucosidase 23 (BGLU23) of Oryza sativa subsp. japonica (Rice).